The following is a 38-amino-acid chain: Kappa-theraphotoxin-Hm2a (38 aa).

3 cysteine pairs are disulfide-bonded: Cys2–Cys16, Cys9–Cys21, and Cys15–Cys32. Phe38 is modified (phenylalanine amide).

The protein belongs to the neurotoxin 10 (Hwtx-1) family. 13 (Hntx-13) subfamily. Expressed by the venom gland.

The protein resides in the secreted. Functionally, inhibitor of voltage-gated potassium channels. It specifically inhibits Kv2.1/KCNB1 channels. The protein is Kappa-theraphotoxin-Hm2a of Heteroscodra maculata (Togo starburst tarantula).